Reading from the N-terminus, the 639-residue chain is DNA mismatch repair protein MutL (639 aa).

Residues 336–392 (SAHDDPTPAISGAARDEEPRGVENRASAGENRFNRPASSPVASAPRPAHVAAPRMPA) form a disordered region. Over residues 349-358 (ARDEEPRGVE) the composition is skewed to basic and acidic residues. A compositionally biased stretch (low complexity) spans 370–392 (RPASSPVASAPRPAHVAAPRMPA).

It belongs to the DNA mismatch repair MutL/HexB family.

Its function is as follows. This protein is involved in the repair of mismatches in DNA. It is required for dam-dependent methyl-directed DNA mismatch repair. May act as a 'molecular matchmaker', a protein that promotes the formation of a stable complex between two or more DNA-binding proteins in an ATP-dependent manner without itself being part of a final effector complex. The protein is DNA mismatch repair protein MutL of Edwardsiella ictaluri (strain 93-146).